The chain runs to 157 residues: DNA gyrase inhibitor (157 aa).

This sequence belongs to the DNA gyrase inhibitor family. Interacts with DNA gyrase.

The protein resides in the cytoplasm. Its function is as follows. Inhibits the supercoiling activity of DNA gyrase. Acts by inhibiting DNA gyrase at an early step, prior to (or at the step of) binding of DNA by the gyrase. It protects cells against toxins that target DNA gyrase, by inhibiting activity of these toxins and reducing the formation of lethal double-strand breaks in the cell. This chain is DNA gyrase inhibitor, found in Yersinia enterocolitica serotype O:8 / biotype 1B (strain NCTC 13174 / 8081).